The following is a 548-amino-acid chain: MADIPAATPSATPFPPELLRDVERRRTFGIISHPDAGKTTLTEKLLLFGGAIQLAGTVKARKSARHATSDWMEVEKQRGISVSSSVMQFEYAGHTINLLDTPGHQDFSEDTYRVLTAVDAAVMVIDAAKGVETQTIKLLEVCRLRNTPIITFINKMDREVRESFDLLQEIEEVLKIDCAPITWPIGMGKTFRGVYHLLEDRVLRFTPGEEKRSEAEVIKGIANAQLDELFPLEVGKLREEVDLIQGASNPFSLGDFLAGKQTPVFFGSGINNFGVQEILQALLDWAPPPQPRVAGVTVADTRLVMPAEAPFSGFVFKIQANMDPKHRDRIAFFRICSGRYSSGMKVKHVRMGREMKLANALTFMANERVLMEDGVAGDIIGIHNHGQLHIGDTLTEGENLGYKGIPYFSPELFSAARLRDPLKSKQLQKGLQELGEEGAIQVFEQEGGNMLLGAVGQLQFEVVAQRLKDEYKVDAIFESADIYTARWLVFPDEVTRRNFEREQGIRVGKDVDGNPVYLATSRYNLEVTMEKWPKVGFHATREHGEKLS.

The 268-residue stretch at 23 to 290 (ERRRTFGIIS…ALLDWAPPPQ (268 aa)) folds into the tr-type G domain. GTP-binding positions include 32-39 (SHPDAGKT), 100-104 (DTPGH), and 154-157 (NKMD).

It belongs to the TRAFAC class translation factor GTPase superfamily. Classic translation factor GTPase family. PrfC subfamily.

Its subcellular location is the cytoplasm. Its function is as follows. Increases the formation of ribosomal termination complexes and stimulates activities of RF-1 and RF-2. It binds guanine nucleotides and has strong preference for UGA stop codons. It may interact directly with the ribosome. The stimulation of RF-1 and RF-2 is significantly reduced by GTP and GDP, but not by GMP. The polypeptide is Peptide chain release factor 3 (Aromatoleum aromaticum (strain DSM 19018 / LMG 30748 / EbN1) (Azoarcus sp. (strain EbN1))).